The chain runs to 260 residues: Tetraspanin-14 (260 aa).

Over M1–N10 the chain is Cytoplasmic. A helical membrane pass occupies residues L11 to H31. The Extracellular portion of the chain corresponds to A32 to R54. Residues V55–F75 form a helical membrane-spanning segment. The Cytoplasmic portion of the chain corresponds to L76 to R80. A helical membrane pass occupies residues L81–M101. Topologically, residues E102–R260 are extracellular. N182 carries an N-linked (GlcNAc...) asparagine glycan.

Belongs to the tetraspanin (TM4SF) family.

The protein localises to the membrane. Functionally, may be involved in the regulation of cell differentiation. The polypeptide is Tetraspanin-14 (TET14) (Arabidopsis thaliana (Mouse-ear cress)).